The sequence spans 99 residues: MLAVVEQGSKQYLVRKGQVISVEKISAEPGKEVEISCVKCVLDEEARPHFGVGTVKAKVLAQERGEKLVIFKKRRRKNSRRRNGHRQYVTILRVTDVTL.

The protein belongs to the bacterial ribosomal protein bL21 family. As to quaternary structure, part of the 50S ribosomal subunit. Contacts protein L20.

This protein binds to 23S rRNA in the presence of protein L20. The polypeptide is Large ribosomal subunit protein bL21 (Neorickettsia sennetsu (strain ATCC VR-367 / Miyayama) (Ehrlichia sennetsu)).